A 1178-amino-acid chain; its full sequence is DNA-directed RNA polymerase I subunit 2 (1178 aa).

The C4-type zinc finger occupies 1097 to 1137; it reads CSLCGSLLTSSVVNVQQKKLIQEIGKLPPGRTPKKVTCYSC.

The protein belongs to the RNA polymerase beta chain family. As to quaternary structure, component of the RNA polymerase I (Pol I) complex consisting of at least 13 subunits.

The protein localises to the nucleus. It catalyses the reaction RNA(n) + a ribonucleoside 5'-triphosphate = RNA(n+1) + diphosphate. Its function is as follows. DNA-dependent RNA polymerase catalyzes the transcription of DNA into RNA using the four ribonucleoside triphosphates as substrates. Second largest core component of RNA polymerase I which synthesizes ribosomal RNA precursors. Proposed to contribute to the polymerase catalytic activity and forms the polymerase active center together with the largest subunit. Pol I is composed of mobile elements and NRPA2 is part of the core element with the central large cleft and probably a clamp element that moves to open and close the cleft. Functionally, essential for the completion of the three rounds of mitosis in female megaspores required for the development of mature gametophytes. In Arabidopsis thaliana (Mouse-ear cress), this protein is DNA-directed RNA polymerase I subunit 2.